We begin with the raw amino-acid sequence, 950 residues long: Translation initiation factor IF-2 (950 aa).

Basic and acidic residues-rich tracts occupy residues 128–156 (KPKVAEPVKKSEPKAAAKAEETKVEKVEA), 165–186 (AEVKTENVADKKEPVVTEEKKK), 200–234 (KRAEDIKKEQAAARPEKKKFDKNRNDRNNRNDNRR), and 291–312 (NRRDRDRKKTDSNRDNTKDGNR). The disordered stretch occupies residues 128-352 (KPKVAEPVKK…YQNNQSSNVP (225 aa)). Polar residues-rich tracts occupy residues 322-336 (NRNQVRNARNSNWNQ) and 343-352 (YQNNQSSNVP). The 172-residue stretch at 448–619 (ERPAVVTIMG…LLVAEVQELK (172 aa)) folds into the tr-type G domain. A G1 region spans residues 457 to 464 (GHVDHGKT). Position 457 to 464 (457 to 464 (GHVDHGKT)) interacts with GTP. Positions 482–486 (GITQH) are G2. The segment at 503 to 506 (DTPG) is G3. GTP contacts are provided by residues 503-507 (DTPGH) and 557-560 (NKLD). The segment at 557–560 (NKLD) is G4. A G5 region spans residues 595–597 (SAK).

Belongs to the TRAFAC class translation factor GTPase superfamily. Classic translation factor GTPase family. IF-2 subfamily.

It is found in the cytoplasm. Functionally, one of the essential components for the initiation of protein synthesis. Protects formylmethionyl-tRNA from spontaneous hydrolysis and promotes its binding to the 30S ribosomal subunits. Also involved in the hydrolysis of GTP during the formation of the 70S ribosomal complex. The polypeptide is Translation initiation factor IF-2 (infB) (Lactococcus lactis subsp. cremoris (Streptococcus cremoris)).